A 156-amino-acid polypeptide reads, in one-letter code: Small ribosomal subunit protein uS7 (156 aa).

The protein belongs to the universal ribosomal protein uS7 family. As to quaternary structure, part of the 30S ribosomal subunit. Contacts proteins S9 and S11.

In terms of biological role, one of the primary rRNA binding proteins, it binds directly to 16S rRNA where it nucleates assembly of the head domain of the 30S subunit. Is located at the subunit interface close to the decoding center, probably blocks exit of the E-site tRNA. The polypeptide is Small ribosomal subunit protein uS7 (Citrobacter koseri (strain ATCC BAA-895 / CDC 4225-83 / SGSC4696)).